The primary structure comprises 411 residues: LL-diaminopimelate aminotransferase (411 aa).

Substrate-binding residues include Tyr-16 and Gly-43. Pyridoxal 5'-phosphate contacts are provided by residues Tyr-73, 109-110, Tyr-133, Asn-188, Tyr-219, and 247-249; these read AK and SYS. Residues Lys-110, Tyr-133, and Asn-188 each coordinate substrate. N6-(pyridoxal phosphate)lysine is present on Lys-250. Residues Arg-258 and Asn-293 each coordinate pyridoxal 5'-phosphate. Substrate is bound by residues Asn-293 and Arg-389.

The protein belongs to the class-I pyridoxal-phosphate-dependent aminotransferase family. LL-diaminopimelate aminotransferase subfamily. Homodimer. The cofactor is pyridoxal 5'-phosphate.

The catalysed reaction is (2S,6S)-2,6-diaminopimelate + 2-oxoglutarate = (S)-2,3,4,5-tetrahydrodipicolinate + L-glutamate + H2O + H(+). The protein operates within amino-acid biosynthesis; L-lysine biosynthesis via DAP pathway; LL-2,6-diaminopimelate from (S)-tetrahydrodipicolinate (aminotransferase route): step 1/1. In terms of biological role, involved in the synthesis of meso-diaminopimelate (m-DAP or DL-DAP), required for both lysine and peptidoglycan biosynthesis. Catalyzes the direct conversion of tetrahydrodipicolinate to LL-diaminopimelate. The polypeptide is LL-diaminopimelate aminotransferase (Methanosphaera stadtmanae (strain ATCC 43021 / DSM 3091 / JCM 11832 / MCB-3)).